Reading from the N-terminus, the 329-residue chain is Malate dehydrogenase (329 aa).

Residue 12–18 (GAAGQIG) coordinates NAD(+). Substrate is bound by residues Arg95 and Arg101. NAD(+) is bound by residues Asn108, Gln115, and 132-134 (VGN). The substrate site is built by Asn134 and Arg165. Residue His190 is the Proton acceptor of the active site.

This sequence belongs to the LDH/MDH superfamily. MDH type 2 family.

It carries out the reaction (S)-malate + NAD(+) = oxaloacetate + NADH + H(+). Functionally, catalyzes the reversible oxidation of malate to oxaloacetate. In Ralstonia nicotianae (strain ATCC BAA-1114 / GMI1000) (Ralstonia solanacearum), this protein is Malate dehydrogenase.